A 369-amino-acid chain; its full sequence is Chorismate synthase (369 aa).

NADP(+) is bound by residues Arg48 and Arg54. FMN is bound by residues 125–127 (RSS), 238–239 (NA), Gly278, 293–297 (KPTSS), and Arg319.

The protein belongs to the chorismate synthase family. Homotetramer. It depends on FMNH2 as a cofactor.

The enzyme catalyses 5-O-(1-carboxyvinyl)-3-phosphoshikimate = chorismate + phosphate. It participates in metabolic intermediate biosynthesis; chorismate biosynthesis; chorismate from D-erythrose 4-phosphate and phosphoenolpyruvate: step 7/7. Its function is as follows. Catalyzes the anti-1,4-elimination of the C-3 phosphate and the C-6 proR hydrogen from 5-enolpyruvylshikimate-3-phosphate (EPSP) to yield chorismate, which is the branch point compound that serves as the starting substrate for the three terminal pathways of aromatic amino acid biosynthesis. This reaction introduces a second double bond into the aromatic ring system. The protein is Chorismate synthase of Cupriavidus metallidurans (strain ATCC 43123 / DSM 2839 / NBRC 102507 / CH34) (Ralstonia metallidurans).